The primary structure comprises 351 residues: Dihydroorotate dehydrogenase (quinone) (351 aa).

FMN contacts are provided by residues 65 to 69 (AGLDK) and Thr89. Residue Lys69 coordinates substrate. 114–118 (NRLGF) serves as a coordination point for substrate. Asn150 and Asn183 together coordinate FMN. Residue Asn183 coordinates substrate. Ser186 serves as the catalytic Nucleophile. Substrate is bound at residue Asn188. Positions 228 and 256 each coordinate FMN. 257 to 258 (NT) lines the substrate pocket. Residues Gly279, Gly308, and 329–330 (YT) each bind FMN.

This sequence belongs to the dihydroorotate dehydrogenase family. Type 2 subfamily. Monomer. FMN serves as cofactor.

It localises to the cell membrane. The enzyme catalyses (S)-dihydroorotate + a quinone = orotate + a quinol. It participates in pyrimidine metabolism; UMP biosynthesis via de novo pathway; orotate from (S)-dihydroorotate (quinone route): step 1/1. Catalyzes the conversion of dihydroorotate to orotate with quinone as electron acceptor. The protein is Dihydroorotate dehydrogenase (quinone) of Acidovorax ebreus (strain TPSY) (Diaphorobacter sp. (strain TPSY)).